Here is a 120-residue protein sequence, read N- to C-terminus: Immunoglobulin lambda variable 2-14 (120 aa).

Positions Met-1 to Ala-19 are cleaved as a signal peptide. Residue Gln-20 is modified to Pyrrolidone carboxylic acid. The framework-1 stretch occupies residues Gln-20–Thr-44. Residues Gln-20–His-119 enclose the Ig-like domain. Residues Cys-41 and Cys-109 are joined by a disulfide bond. Residues Ser-45–Tyr-53 form a complementarity-determining-1 region. The framework-2 stretch occupies residues Val-54–Tyr-70. The tract at residues Glu-71–Ser-73 is complementarity-determining-2. The segment at Asn-74–Cys-109 is framework-3. The segment at Ser-110–His-119 is complementarity-determining-3.

In terms of assembly, immunoglobulins are composed of two identical heavy chains and two identical light chains; disulfide-linked.

The protein resides in the secreted. The protein localises to the cell membrane. In terms of biological role, v region of the variable domain of immunoglobulin light chains that participates in the antigen recognition. Immunoglobulins, also known as antibodies, are membrane-bound or secreted glycoproteins produced by B lymphocytes. In the recognition phase of humoral immunity, the membrane-bound immunoglobulins serve as receptors which, upon binding of a specific antigen, trigger the clonal expansion and differentiation of B lymphocytes into immunoglobulins-secreting plasma cells. Secreted immunoglobulins mediate the effector phase of humoral immunity, which results in the elimination of bound antigens. The antigen binding site is formed by the variable domain of one heavy chain, together with that of its associated light chain. Thus, each immunoglobulin has two antigen binding sites with remarkable affinity for a particular antigen. The variable domains are assembled by a process called V-(D)-J rearrangement and can then be subjected to somatic hypermutations which, after exposure to antigen and selection, allow affinity maturation for a particular antigen. The chain is Immunoglobulin lambda variable 2-14 from Homo sapiens (Human).